A 174-amino-acid polypeptide reads, in one-letter code: NADH-ubiquinone oxidoreductase chain 6 (174 aa).

Transmembrane regions (helical) follow at residues 25–45 (SMGLMLLIQTFLTCLITSIYV), 48–68 (FWFSYVLFLIFLGGMLILFIY), 82–102 (FSLTLISLIIFSIFTIVFFMI), and 143–163 (LITLLLINYLFLTLLVTVKIT).

It belongs to the complex I subunit 6 family.

The protein resides in the mitochondrion membrane. It carries out the reaction a ubiquinone + NADH + 5 H(+)(in) = a ubiquinol + NAD(+) + 4 H(+)(out). Core subunit of the mitochondrial membrane respiratory chain NADH dehydrogenase (Complex I) that is believed to belong to the minimal assembly required for catalysis. Complex I functions in the transfer of electrons from NADH to the respiratory chain. The immediate electron acceptor for the enzyme is believed to be ubiquinone. The polypeptide is NADH-ubiquinone oxidoreductase chain 6 (ND6) (Anopheles albimanus (New world malaria mosquito)).